An 85-amino-acid chain; its full sequence is RNA-binding protein Hfq (85 aa).

Positions 9–68 (DPFLNELRKEKVPVSVFLVNGIKLHGIIDSFDQYVVMLKNSITQMVYKHAISTVVPSRMV) constitute a Sm domain.

The protein belongs to the Hfq family. In terms of assembly, homohexamer.

Functionally, RNA chaperone that binds small regulatory RNA (sRNAs) and mRNAs to facilitate mRNA translational regulation in response to envelope stress, environmental stress and changes in metabolite concentrations. Also binds with high specificity to tRNAs. This chain is RNA-binding protein Hfq, found in Legionella pneumophila (strain Paris).